A 299-amino-acid chain; its full sequence is Protein tantalus (299 aa).

The disordered stretch occupies residues 16 to 100 (KDNRSPTTNS…RSSTFGARAG (85 aa)). Polar residues predominate over residues 20–35 (SPTTNSNLSWQLNQMA). Positions 53–69 (ESDDNVSSESHDSDDVD) are enriched in acidic residues. Residues 84–93 (CISGSSRRSS) are compositionally biased toward low complexity. Phosphoserine occurs at positions 204 and 264.

Binds to DNA in vitro. Interacts directly with Asx. In terms of tissue distribution, ubiquitously expressed in precellularized embryos. Then it decreases at cellular blastoderm to increase again during germ band extension. During germ band extension, it is highly expressed in somatic and visceral mesoderm. Ubiquitously expressed in imaginal disks. In ovary, it is expressed from stage 10.

The protein resides in the nucleus. It localises to the cytoplasm. Its subcellular location is the chromosome. Its function is as follows. Potential cofactor involved in sensory organ development. Despite its interaction with the Polycomb group protein Asx, it does not regulate the expression of homeotic genes. The protein is Protein tantalus of Drosophila melanogaster (Fruit fly).